The sequence spans 335 residues: Basic endochitinase B (335 aa).

An N-terminal signal peptide occupies residues 1–33 (MPPQKENHRTLNKMKTNLFLFLIFSLLLSLSSA). One can recognise a Chitin-binding type-1 domain in the interval 34-75 (EQCGRQAGGALCPNGLCCSEFGWCGNTEPYCKQPGCQSQCTP). Intrachain disulfides connect Cys36-Cys51, Cys45-Cys57, Cys50-Cys64, Cys69-Cys73, Cys107-Cys169, Cys181-Cys189, and Cys288-Cys320. The active-site Proton donor is the Glu151. A propeptide spans 329–335 (GLLEAAI) (removed in mature form). The Vacuolar targeting signal motif lies at 329–335 (GLLEAAI).

It belongs to the glycosyl hydrolase 19 family. Chitinase class I subfamily. High constitutive level in roots with lower levels in leaves and flowering shoots.

Its subcellular location is the vacuole. The catalysed reaction is Random endo-hydrolysis of N-acetyl-beta-D-glucosaminide (1-&gt;4)-beta-linkages in chitin and chitodextrins.. Its function is as follows. Defense against chitin-containing fungal pathogens. Seems particularly implicated in resistance to jasmonate-inducing pathogens such as A.brassicicola. In vitro antifungal activity against T.reesei, but not against A.solani, F.oxysporum, S.sclerotiorum, G.graminis and P.megasperma. This Arabidopsis thaliana (Mouse-ear cress) protein is Basic endochitinase B (CHI-B).